Consider the following 445-residue polypeptide: Glutamyl-tRNA(Gln) amidotransferase subunit D (445 aa).

The region spanning 93–425 is the Asparaginase/glutaminase domain; sequence SEIKIISTGG…EKIRSLMISN (333 aa). Catalysis depends on residues threonine 103, threonine 179, aspartate 180, and lysine 258.

The protein belongs to the asparaginase 1 family. GatD subfamily. As to quaternary structure, heterodimer of GatD and GatE.

It carries out the reaction L-glutamyl-tRNA(Gln) + L-glutamine + ATP + H2O = L-glutaminyl-tRNA(Gln) + L-glutamate + ADP + phosphate + H(+). Allows the formation of correctly charged Gln-tRNA(Gln) through the transamidation of misacylated Glu-tRNA(Gln) in organisms which lack glutaminyl-tRNA synthetase. The reaction takes place in the presence of glutamine and ATP through an activated gamma-phospho-Glu-tRNA(Gln). The GatDE system is specific for glutamate and does not act on aspartate. The protein is Glutamyl-tRNA(Gln) amidotransferase subunit D of Saccharolobus islandicus (strain L.S.2.15 / Lassen #1) (Sulfolobus islandicus).